The primary structure comprises 284 residues: Tropomyosin (284 aa).

Residues 1 to 284 are a coiled coil; that stretch reads MDAIKKKMQA…DMTFTELIGN (284 aa).

Belongs to the tropomyosin family. In terms of assembly, homodimer.

Tropomyosin, in association with the troponin complex, plays a central role in the calcium dependent regulation of muscle contraction. The chain is Tropomyosin from Periplaneta fuliginosa (Smokybrown cockroach).